Reading from the N-terminus, the 378-residue chain is Chaperone protein DnaJ (378 aa).

Residues 5 to 70 (DYYEVLGVAK…QKRAAYDQYG (66 aa)) enclose the J domain. Residues 138–216 (GYDTQIRVPS…CHGSGKVKET (79 aa)) form a CR-type zinc finger. Zn(2+) is bound by residues C151, C154, C168, C171, C190, C193, C204, and C207. CXXCXGXG motif repeat units lie at residues 151 to 158 (CEVCHGSG), 168 to 175 (CPTCHGQG), 190 to 197 (CPKCHGTG), and 204 to 211 (CVHCHGSG).

The protein belongs to the DnaJ family. Homodimer. The cofactor is Zn(2+).

The protein localises to the cytoplasm. Its function is as follows. Participates actively in the response to hyperosmotic and heat shock by preventing the aggregation of stress-denatured proteins and by disaggregating proteins, also in an autonomous, DnaK-independent fashion. Unfolded proteins bind initially to DnaJ; upon interaction with the DnaJ-bound protein, DnaK hydrolyzes its bound ATP, resulting in the formation of a stable complex. GrpE releases ADP from DnaK; ATP binding to DnaK triggers the release of the substrate protein, thus completing the reaction cycle. Several rounds of ATP-dependent interactions between DnaJ, DnaK and GrpE are required for fully efficient folding. Also involved, together with DnaK and GrpE, in the DNA replication of plasmids through activation of initiation proteins. The chain is Chaperone protein DnaJ from Burkholderia lata (strain ATCC 17760 / DSM 23089 / LMG 22485 / NCIMB 9086 / R18194 / 383).